A 350-amino-acid chain; its full sequence is Arginine/serine-rich coiled-coil protein 2 (350 aa).

Disordered stretches follow at residues 1–146 and 328–350; these read MIRT…FRGR and SQTHTQRGMGLGFTSSMRGMDAV. Positions 10 to 24 are enriched in basic residues; the sequence is QARRHEVKAKSSKKH. Residues 25 to 51 show a composition bias toward basic and acidic residues; that stretch reads RSDDTVDRDHSDKIRDRLNSSENGDEK. A compositionally biased stretch (basic residues) spans 52 to 132; sequence HRRKEKRSSR…IEKPRRHSRS (81 aa). A coiled-coil region spans residues 146-187; that stretch reads RNAAMDAQEALARRLERAKKLQEQREKESAEKQQEIAAVAAA.

Belongs to the RSRC2 family.

In Xenopus laevis (African clawed frog), this protein is Arginine/serine-rich coiled-coil protein 2 (rsrc2).